A 666-amino-acid polypeptide reads, in one-letter code: UvrABC system protein B (666 aa).

Residues 25–412 enclose the Helicase ATP-binding domain; that stretch reads EQVQAGAPYQ…EEQIVEQVIR (388 aa). 38-45 is a binding site for ATP; it reads GATGTGKT. The short motif at 91 to 114 is the Beta-hairpin element; the sequence is YYDYYQPEAYIPVTDTYIAKTASI. Residues 429–595 form the Helicase C-terminal domain; that stretch reads QVDDLLAEIQ…PIIKRSSNAI (167 aa). The 36-residue stretch at 626 to 661 folds into the UVR domain; it reads PNLITQLEAQMKEAAKNLEFEEAAQYRDRIKKLRER.

This sequence belongs to the UvrB family. As to quaternary structure, forms a heterotetramer with UvrA during the search for lesions. Interacts with UvrC in an incision complex.

The protein localises to the cytoplasm. Functionally, the UvrABC repair system catalyzes the recognition and processing of DNA lesions. A damage recognition complex composed of 2 UvrA and 2 UvrB subunits scans DNA for abnormalities. Upon binding of the UvrA(2)B(2) complex to a putative damaged site, the DNA wraps around one UvrB monomer. DNA wrap is dependent on ATP binding by UvrB and probably causes local melting of the DNA helix, facilitating insertion of UvrB beta-hairpin between the DNA strands. Then UvrB probes one DNA strand for the presence of a lesion. If a lesion is found the UvrA subunits dissociate and the UvrB-DNA preincision complex is formed. This complex is subsequently bound by UvrC and the second UvrB is released. If no lesion is found, the DNA wraps around the other UvrB subunit that will check the other stand for damage. The polypeptide is UvrABC system protein B (Synechococcus sp. (strain ATCC 27144 / PCC 6301 / SAUG 1402/1) (Anacystis nidulans)).